The chain runs to 138 residues: Large ribosomal subunit protein eL14A (138 aa).

The residue at position 2 (serine 2) is an N-acetylserine.

This sequence belongs to the eukaryotic ribosomal protein eL14 family. Component of the large ribosomal subunit (LSU). Mature yeast ribosomes consist of a small (40S) and a large (60S) subunit. The 40S small subunit contains 1 molecule of ribosomal RNA (18S rRNA) and 33 different proteins (encoded by 57 genes). The large 60S subunit contains 3 rRNA molecules (25S, 5.8S and 5S rRNA) and 46 different proteins (encoded by 81 genes). Post-translationally, N-terminally acetylated by acetyltransferase NatA.

Its subcellular location is the cytoplasm. Component of the ribosome, a large ribonucleoprotein complex responsible for the synthesis of proteins in the cell. The small ribosomal subunit (SSU) binds messenger RNAs (mRNAs) and translates the encoded message by selecting cognate aminoacyl-transfer RNA (tRNA) molecules. The large subunit (LSU) contains the ribosomal catalytic site termed the peptidyl transferase center (PTC), which catalyzes the formation of peptide bonds, thereby polymerizing the amino acids delivered by tRNAs into a polypeptide chain. The nascent polypeptides leave the ribosome through a tunnel in the LSU and interact with protein factors that function in enzymatic processing, targeting, and the membrane insertion of nascent chains at the exit of the ribosomal tunnel. The polypeptide is Large ribosomal subunit protein eL14A (Saccharomyces cerevisiae (strain ATCC 204508 / S288c) (Baker's yeast)).